The following is a 344-amino-acid chain: Nicotinate-nucleotide--dimethylbenzimidazole phosphoribosyltransferase (344 aa).

The active-site Proton acceptor is the Glu-310.

This sequence belongs to the CobT family.

The catalysed reaction is 5,6-dimethylbenzimidazole + nicotinate beta-D-ribonucleotide = alpha-ribazole 5'-phosphate + nicotinate + H(+). The protein operates within nucleoside biosynthesis; alpha-ribazole biosynthesis; alpha-ribazole from 5,6-dimethylbenzimidazole: step 1/2. Catalyzes the synthesis of alpha-ribazole-5'-phosphate from nicotinate mononucleotide (NAMN) and 5,6-dimethylbenzimidazole (DMB). The chain is Nicotinate-nucleotide--dimethylbenzimidazole phosphoribosyltransferase from Shewanella amazonensis (strain ATCC BAA-1098 / SB2B).